Reading from the N-terminus, the 143-residue chain is uncharacterized protein (143 aa).

This is an uncharacterized protein from Archaeoglobus fulgidus (strain ATCC 49558 / DSM 4304 / JCM 9628 / NBRC 100126 / VC-16).